A 461-amino-acid chain; its full sequence is Cysteine--tRNA ligase (461 aa).

Residue Cys31 participates in Zn(2+) binding. A 'HIGH' region motif is present at residues 33–43 (PTVYDFAHIGN). Zn(2+) contacts are provided by Cys219, His244, and Glu248. Positions 277 to 281 (KMSKS) match the 'KMSKS' region motif. Lys280 provides a ligand contact to ATP. Basic and acidic residues predominate over residues 436 to 452 (SEKGIQLKDGKDKETGE). The segment at 436–461 (SEKGIQLKDGKDKETGERTTTWELKR) is disordered.

Belongs to the class-I aminoacyl-tRNA synthetase family. As to quaternary structure, monomer. It depends on Zn(2+) as a cofactor.

The protein resides in the cytoplasm. It catalyses the reaction tRNA(Cys) + L-cysteine + ATP = L-cysteinyl-tRNA(Cys) + AMP + diphosphate. This chain is Cysteine--tRNA ligase, found in Agrobacterium fabrum (strain C58 / ATCC 33970) (Agrobacterium tumefaciens (strain C58)).